Reading from the N-terminus, the 110-residue chain is Putative zinc finger protein ORF110 (110 aa).

Residues 3 to 26 (YVCTACKLKFHTFEEFKIHVHLFH) form a C2H2-type zinc finger.

The protein is Putative zinc finger protein ORF110 of Acidianus filamentous virus 1 (isolate United States/Yellowstone) (AFV-1).